The following is a 371-amino-acid chain: Aminomethyltransferase (371 aa).

Belongs to the GcvT family. In terms of assembly, the glycine cleavage system is composed of four proteins: P, T, L and H.

The catalysed reaction is N(6)-[(R)-S(8)-aminomethyldihydrolipoyl]-L-lysyl-[protein] + (6S)-5,6,7,8-tetrahydrofolate = N(6)-[(R)-dihydrolipoyl]-L-lysyl-[protein] + (6R)-5,10-methylene-5,6,7,8-tetrahydrofolate + NH4(+). The glycine cleavage system catalyzes the degradation of glycine. This chain is Aminomethyltransferase, found in Pectobacterium atrosepticum (strain SCRI 1043 / ATCC BAA-672) (Erwinia carotovora subsp. atroseptica).